Consider the following 562-residue polypeptide: Glutamate--tRNA ligase (562 aa).

The short motif at 101–111 is the 'HIGH' region element; the sequence is PEPNGYPHIGH.

Belongs to the class-I aminoacyl-tRNA synthetase family. Glutamate--tRNA ligase type 2 subfamily.

Its subcellular location is the cytoplasm. The catalysed reaction is tRNA(Glu) + L-glutamate + ATP = L-glutamyl-tRNA(Glu) + AMP + diphosphate. Functionally, catalyzes the attachment of glutamate to tRNA(Glu) in a two-step reaction: glutamate is first activated by ATP to form Glu-AMP and then transferred to the acceptor end of tRNA(Glu). The protein is Glutamate--tRNA ligase of Cenarchaeum symbiosum (strain A).